Reading from the N-terminus, the 509-residue chain is Metal transporter Nramp3 (509 aa).

Low complexity predominate over residues 1–12 (MPQLENNEPLLI). The tract at residues 1 to 25 (MPQLENNEPLLINEEEEEETAYDET) is disordered. The span at 13–23 (NEEEEEETAYD) shows a compositional bias: acidic residues. The next 12 membrane-spanning stretches (helical) occupy residues 56–76 (LWLF…PGNL), 84–104 (AVAG…GLLV), 133–153 (MVLW…EVIG), 165–185 (ILPL…FLFL), 193–213 (LEAV…WMFG), 239–259 (AVGV…SALV), 285–305 (IALF…AKGF), 327–347 (YGGG…AAGQ), 383–403 (IIPT…LDVL), 406–426 (WLNV…LCLV), 444–464 (IAWL…LEFF), and 472–492 (VYTG…LYLI).

Belongs to the NRAMP (TC 2.A.55) family. In terms of tissue distribution, expressed in vascular tissues.

It localises to the vacuole membrane. Functionally, vacuolar metal transporter involved in intracellular metal homeostasis. Can transport iron (Fe), manganese (Mn) and cadmium (Cd). Regulates metal accumulation under Fe starvation. Acts redundantly with NRAMP4 to mobilize vacuolar Fe and provide sufficient Fe during seed germination. In association with NRAMP4, required for optimal growth and photosynthesis under Mn deficiency. Exports Mn from vacuoles in leaf mesophyll cells, making Mn available for functional photosystem II in chloroplasts. Involved in basal resistance to the bacterial pathogen E.chrysanthemi. In Arabidopsis thaliana (Mouse-ear cress), this protein is Metal transporter Nramp3 (NRAMP3).